Reading from the N-terminus, the 540-residue chain is Fumonisin B1 esterase (540 aa).

Residue Ser-240 is the Acyl-ester intermediate of the active site. Residues Glu-356 and His-448 each act as charge relay system in the active site. Positions 521–540 (QVGSGEGLGVSPSKACQPSK) are disordered.

The protein belongs to the type-B carboxylesterase/lipase family.

It carries out the reaction fumonisin B1 + 2 H2O = 2 tricarballylate + (2S,3S,5R,10R,12S,14S,15R,16R)-2-amino-12,16-dimethylicosane-3,5,10,14,15-pentol + 2 H(+). Its function is as follows. Involved in degradation of fumonisin B1. Catalyzes the hydrolysis of fumonisin B1 (FB1) to aminopentol (HFB1). The chain is Fumonisin B1 esterase (fumD) from Sphingopyxis macrogoltabida (Sphingomonas macrogoltabidus).